A 249-amino-acid polypeptide reads, in one-letter code: Deoxyribose-phosphate aldolase (249 aa).

Catalysis depends on D109, which acts as the Proton donor/acceptor. K171 serves as the catalytic Schiff-base intermediate with acetaldehyde. The active-site Proton donor/acceptor is the K200.

Belongs to the DeoC/FbaB aldolase family. DeoC type 1 subfamily.

Its subcellular location is the cytoplasm. It catalyses the reaction 2-deoxy-D-ribose 5-phosphate = D-glyceraldehyde 3-phosphate + acetaldehyde. It participates in carbohydrate degradation; 2-deoxy-D-ribose 1-phosphate degradation; D-glyceraldehyde 3-phosphate and acetaldehyde from 2-deoxy-alpha-D-ribose 1-phosphate: step 2/2. Catalyzes a reversible aldol reaction between acetaldehyde and D-glyceraldehyde 3-phosphate to generate 2-deoxy-D-ribose 5-phosphate. The chain is Deoxyribose-phosphate aldolase from Klebsiella pneumoniae subsp. pneumoniae (strain ATCC 700721 / MGH 78578).